The primary structure comprises 325 residues: Beta-ketoacyl-[acyl-carrier-protein] synthase III (325 aa).

Active-site residues include Cys113 and His250. Residues 251 to 255 (QANIR) form an ACP-binding region. Residue Asn280 is part of the active site.

Belongs to the thiolase-like superfamily. FabH family. In terms of assembly, homodimer.

It is found in the cytoplasm. It carries out the reaction malonyl-[ACP] + acetyl-CoA + H(+) = 3-oxobutanoyl-[ACP] + CO2 + CoA. Its pathway is lipid metabolism; fatty acid biosynthesis. Catalyzes the condensation reaction of fatty acid synthesis by the addition to an acyl acceptor of two carbons from malonyl-ACP. Catalyzes the first condensation reaction which initiates fatty acid synthesis and may therefore play a role in governing the total rate of fatty acid production. Possesses both acetoacetyl-ACP synthase and acetyl transacylase activities. Its substrate specificity determines the biosynthesis of branched-chain and/or straight-chain of fatty acids. The chain is Beta-ketoacyl-[acyl-carrier-protein] synthase III from Streptococcus suis (strain 98HAH33).